The primary structure comprises 78 residues: MKTSAFFIAVLLILSCSSSMIMGVSYHENRCHDWVDCAIWCKQWVPQPKCINRVCDCKPKSLPTNDEIPKSASSSSKN.

The N-terminal stretch at 1–19 (MKTSAFFIAVLLILSCSSS) is a signal peptide. 3 cysteine pairs are disulfide-bonded: Cys-31–Cys-50, Cys-37–Cys-55, and Cys-41–Cys-57.

It belongs to the DEFL family.

The protein localises to the secreted. This is Defensin-like protein 308 from Arabidopsis thaliana (Mouse-ear cress).